Consider the following 234-residue polypeptide: Probable GTP-binding protein EngB (234 aa).

An EngB-type G domain is found at 23 to 209 (AVPEVAFAGR…QRTVAGWLCL (187 aa)). GTP is bound by residues 31 to 38 (GRSNAGKS), 58 to 62 (GRTQH), 82 to 85 (DLPG), 149 to 152 (TKAD), and 187 to 190 (LFSS). Positions 38 and 60 each coordinate Mg(2+). The interval 210 to 234 (PEAMPPSPDAEPAKKTPSPDAQRGE) is disordered.

Belongs to the TRAFAC class TrmE-Era-EngA-EngB-Septin-like GTPase superfamily. EngB GTPase family. Requires Mg(2+) as cofactor.

In terms of biological role, necessary for normal cell division and for the maintenance of normal septation. In Ralstonia nicotianae (strain ATCC BAA-1114 / GMI1000) (Ralstonia solanacearum), this protein is Probable GTP-binding protein EngB.